The sequence spans 323 residues: Lipoyl synthase (323 aa).

7 residues coordinate [4Fe-4S] cluster: cysteine 61, cysteine 66, cysteine 72, cysteine 87, cysteine 91, cysteine 94, and serine 300. Residues 73-289 enclose the Radical SAM core domain; sequence WDKKHATFMI…ETVAYSKGFL (217 aa).

Belongs to the radical SAM superfamily. Lipoyl synthase family. [4Fe-4S] cluster serves as cofactor.

The protein localises to the cytoplasm. It catalyses the reaction [[Fe-S] cluster scaffold protein carrying a second [4Fe-4S](2+) cluster] + N(6)-octanoyl-L-lysyl-[protein] + 2 oxidized [2Fe-2S]-[ferredoxin] + 2 S-adenosyl-L-methionine + 4 H(+) = [[Fe-S] cluster scaffold protein] + N(6)-[(R)-dihydrolipoyl]-L-lysyl-[protein] + 4 Fe(3+) + 2 hydrogen sulfide + 2 5'-deoxyadenosine + 2 L-methionine + 2 reduced [2Fe-2S]-[ferredoxin]. Its pathway is protein modification; protein lipoylation via endogenous pathway; protein N(6)-(lipoyl)lysine from octanoyl-[acyl-carrier-protein]: step 2/2. Catalyzes the radical-mediated insertion of two sulfur atoms into the C-6 and C-8 positions of the octanoyl moiety bound to the lipoyl domains of lipoate-dependent enzymes, thereby converting the octanoylated domains into lipoylated derivatives. In Rhizobium leguminosarum bv. trifolii (strain WSM2304), this protein is Lipoyl synthase.